Reading from the N-terminus, the 264-residue chain is Formamidopyrimidine-DNA glycosylase (264 aa).

Pro-2 serves as the catalytic Schiff-base intermediate with DNA. The active-site Proton donor is the Glu-3. The Proton donor; for beta-elimination activity role is filled by Lys-58. Residues His-89, Arg-107, and Arg-144 each contribute to the DNA site. An FPG-type zinc finger spans residues 229–263 (RVYQRTGEPCLNCKTPIRRVIVTQRSSHFCPHCQK). The active-site Proton donor; for delta-elimination activity is Arg-253.

It belongs to the FPG family. As to quaternary structure, monomer. Zn(2+) serves as cofactor.

It catalyses the reaction Hydrolysis of DNA containing ring-opened 7-methylguanine residues, releasing 2,6-diamino-4-hydroxy-5-(N-methyl)formamidopyrimidine.. It carries out the reaction 2'-deoxyribonucleotide-(2'-deoxyribose 5'-phosphate)-2'-deoxyribonucleotide-DNA = a 3'-end 2'-deoxyribonucleotide-(2,3-dehydro-2,3-deoxyribose 5'-phosphate)-DNA + a 5'-end 5'-phospho-2'-deoxyribonucleoside-DNA + H(+). Involved in base excision repair of DNA damaged by oxidation or by mutagenic agents. Acts as a DNA glycosylase that recognizes and removes damaged bases. Has a preference for oxidized purines, such as 7,8-dihydro-8-oxoguanine (8-oxoG). Has AP (apurinic/apyrimidinic) lyase activity and introduces nicks in the DNA strand. Cleaves the DNA backbone by beta-delta elimination to generate a single-strand break at the site of the removed base with both 3'- and 5'-phosphates. The chain is Formamidopyrimidine-DNA glycosylase from Solibacter usitatus (strain Ellin6076).